A 361-amino-acid chain; its full sequence is Anhydro-N-acetylmuramic acid kinase (361 aa).

Residue 10–17 participates in ATP binding; that stretch reads GTSLDGVD.

The protein belongs to the anhydro-N-acetylmuramic acid kinase family.

It catalyses the reaction 1,6-anhydro-N-acetyl-beta-muramate + ATP + H2O = N-acetyl-D-muramate 6-phosphate + ADP + H(+). It functions in the pathway amino-sugar metabolism; 1,6-anhydro-N-acetylmuramate degradation. Its pathway is cell wall biogenesis; peptidoglycan recycling. Catalyzes the specific phosphorylation of 1,6-anhydro-N-acetylmuramic acid (anhMurNAc) with the simultaneous cleavage of the 1,6-anhydro ring, generating MurNAc-6-P. Is required for the utilization of anhMurNAc either imported from the medium or derived from its own cell wall murein, and thus plays a role in cell wall recycling. This is Anhydro-N-acetylmuramic acid kinase from Gluconobacter oxydans (strain 621H) (Gluconobacter suboxydans).